Reading from the N-terminus, the 85-residue chain is UPF0181 protein YPO1774/y2534/YP_1619 (85 aa).

A disordered region spans residues 50-85; that stretch reads QAMAIFEDHDFDEHTESDYRRDDEPDADDIEDPYEG. Basic and acidic residues predominate over residues 55 to 72; it reads FEDHDFDEHTESDYRRDD. Acidic residues predominate over residues 73–85; that stretch reads EPDADDIEDPYEG.

It belongs to the UPF0181 family.

In Yersinia pestis, this protein is UPF0181 protein YPO1774/y2534/YP_1619.